The sequence spans 417 residues: uncharacterized protein (417 aa).

10 helical membrane passes run 21–41 (ISSLGDWLHILAVLTLAAFQL), 50–70 (LLMMSFALPVIVLGPVSGLLA), 88–108 (LTVISCVYVSELWQLYVLLSV), 166–186 (SVFYINAGAFFLSAVILFFLP), 217–237 (MPLLLTGLLTACVVLFVLQIG), 255–275 (LAGWCMAVSGAGMLLTAAITG), 283–303 (LLYFSAGTLLLGLATGGAPFL), 308–328 (IAGITLFIFAFFIMGAAFGLV), 351–371 (AIQSATTLASILGMAGGGVLA), and 373–393 (WIGVSLAFLVCGCLLIMIGLI).

It belongs to the major facilitator superfamily. TCR/Tet family.

The protein localises to the cell membrane. This is an uncharacterized protein from Bacillus subtilis (strain 168).